The sequence spans 329 residues: Serine dehydratase-like (329 aa).

Met1 is modified (N-acetylmethionine). The residue at position 48 (Lys48) is an N6-(pyridoxal phosphate)lysine.

It belongs to the serine/threonine dehydratase family. Monomer. Homodimer. Requires pyridoxal 5'-phosphate as cofactor. In terms of tissue distribution, abundantly expressed in liver.

The catalysed reaction is L-serine = pyruvate + NH4(+). It catalyses the reaction L-threonine = 2-oxobutanoate + NH4(+). The enzyme catalyses L-glutamate = D-glutamate. Functionally, catalyzes the pyridoxal-phosphate-dependent dehydrative deamination of L-threonine and L-serine to ammonia and alpha-ketobutyrate and pyruvate, respectively. Also exhibits racemase activity towards L-glutamate and D-glutamate. The protein is Serine dehydratase-like (Sdsl) of Mus musculus (Mouse).